A 343-amino-acid polypeptide reads, in one-letter code: Palmitoyltransferase ZDHHC4 (343 aa).

The Lumenal segment spans residues 1–2 (MD). Residues 3–23 (FLVLFLFYLAFLLICVVLICI) traverse the membrane as a helical segment. Residues 24 to 67 (FTKSQRLKAVVLGGAQVCSRVIPQCLQRAVQTLLHQLFHTRHPT) lie on the Cytoplasmic side of the membrane. The chain crosses the membrane as a helical span at residues 68–88 (FIVLHLLLQGLVYAEYTCEVF). Residues 89–100 (GYCRELEFSLPY) lie on the Lumenal side of the membrane. Residues 101–121 (LLLPYVLLSVNLVFFTLTCAA) traverse the membrane as a helical segment. Residues 122-193 (NPGTITKANE…NCIGAWNTRY (72 aa)) lie on the Cytoplasmic side of the membrane. The 51-residue stretch at 149-199 (SRCPTCDLRKPARSKHCRLCDRCVHRFDHHCVWVNNCIGAWNTRYFLIYLL) folds into the DHHC domain. C179 (S-palmitoyl cysteine intermediate) is an active-site residue. The chain crosses the membrane as a helical span at residues 194–214 (FLIYLLTLTASAATIATVTAA). Topologically, residues 215-255 (FLLRLVTVSDLYQETYLDDVGHFQAVDTVFLIQHLFLAFPR) are lumenal. A helical transmembrane segment spans residues 256 to 276 (IVFLLGFVIVLSMLLAGYLCF). The Cytoplasmic segment spans residues 277 to 343 (ALYLAATNQT…ATPSYKKKEK (67 aa)). Positions 340–343 (KKEK) match the Di-lysine motif motif.

This sequence belongs to the DHHC palmitoyltransferase family. As to quaternary structure, interacts with CPT1A.

The protein localises to the endoplasmic reticulum membrane. The protein resides in the golgi apparatus membrane. It is found in the cell membrane. The catalysed reaction is L-cysteinyl-[protein] + hexadecanoyl-CoA = S-hexadecanoyl-L-cysteinyl-[protein] + CoA. Functionally, palmitoyltransferase that could catalyze the addition of palmitate onto protein substrates including the D(2) dopamine receptor DRD2, GSK3B or MAVS. Mediates GSK3B palmitoylation to prevent its AKT1-mediated phosphorylation leading to activation of the STAT3 signaling pathway. Also catalyzes MAVS palmitoylation which promotes its stabilization and activation by inhibiting 'Lys-48'- but facilitating 'Lys-63'-linked ubiquitination. The chain is Palmitoyltransferase ZDHHC4 from Mus musculus (Mouse).